A 386-amino-acid chain; its full sequence is Mannitol-1-phosphate 5-dehydrogenase (386 aa).

6 to 17 is a binding site for NAD(+); that stretch reads AIHFGGGNIGRG. The active site involves K214.

It belongs to the mannitol dehydrogenase family. Monomer.

The catalysed reaction is D-mannitol 1-phosphate + NAD(+) = beta-D-fructose 6-phosphate + NADH + H(+). Functionally, catalyzes the NAD(H)-dependent interconversion of D-fructose 6-phosphate and D-mannitol 1-phosphate in the mannitol metabolic pathway. Plays a key role in liamocins biosynthesis by providing the mannitol moity that is linked to 3,5-dihydroxydecanoic acid (provided by the HR-PKS PKS1) via ester bond formation catalyzed by the esterase EST1. The polypeptide is Mannitol-1-phosphate 5-dehydrogenase (Aureobasidium melanogenum (Aureobasidium pullulans var. melanogenum)).